We begin with the raw amino-acid sequence, 77 residues long: Large ribosomal subunit protein bL28 (77 aa).

This sequence belongs to the bacterial ribosomal protein bL28 family.

The protein is Large ribosomal subunit protein bL28 of Delftia acidovorans (strain DSM 14801 / SPH-1).